The chain runs to 258 residues: Tryptophan synthase alpha chain (258 aa).

Active-site proton acceptor residues include glutamate 47 and aspartate 58.

It belongs to the TrpA family. Tetramer of two alpha and two beta chains.

The catalysed reaction is (1S,2R)-1-C-(indol-3-yl)glycerol 3-phosphate + L-serine = D-glyceraldehyde 3-phosphate + L-tryptophan + H2O. It functions in the pathway amino-acid biosynthesis; L-tryptophan biosynthesis; L-tryptophan from chorismate: step 5/5. Its function is as follows. The alpha subunit is responsible for the aldol cleavage of indoleglycerol phosphate to indole and glyceraldehyde 3-phosphate. In Bacillus mycoides (strain KBAB4) (Bacillus weihenstephanensis), this protein is Tryptophan synthase alpha chain.